Reading from the N-terminus, the 107-residue chain is Putative double-stranded DNA mimic protein HI_1450 (107 aa).

Belongs to the putative dsDNA mimic protein family. In terms of assembly, monomer in solution. Interacts with the DNA-binding protein HU.

Functionally, may act as a double-stranded DNA (dsDNA) mimic. Probably regulates the activity of the DNA-binding protein HU. The protein is Putative double-stranded DNA mimic protein HI_1450 of Haemophilus influenzae (strain ATCC 51907 / DSM 11121 / KW20 / Rd).